A 101-amino-acid chain; its full sequence is Integration host factor subunit beta (101 aa).

It belongs to the bacterial histone-like protein family. In terms of assembly, heterodimer of an alpha and a beta chain.

Functionally, this protein is one of the two subunits of integration host factor, a specific DNA-binding protein that functions in genetic recombination as well as in transcriptional and translational control. The sequence is that of Integration host factor subunit beta from Rhodopseudomonas palustris (strain BisB5).